The chain runs to 138 residues: Putative pre-16S rRNA nuclease (138 aa).

The protein belongs to the YqgF nuclease family.

It is found in the cytoplasm. Could be a nuclease involved in processing of the 5'-end of pre-16S rRNA. This chain is Putative pre-16S rRNA nuclease, found in Azobacteroides pseudotrichonymphae genomovar. CFP2.